Here is a 135-residue protein sequence, read N- to C-terminus: Ribosome-binding factor A (135 aa).

This sequence belongs to the RbfA family. Monomer. Binds 30S ribosomal subunits, but not 50S ribosomal subunits or 70S ribosomes.

It localises to the cytoplasm. Functionally, one of several proteins that assist in the late maturation steps of the functional core of the 30S ribosomal subunit. Associates with free 30S ribosomal subunits (but not with 30S subunits that are part of 70S ribosomes or polysomes). Required for efficient processing of 16S rRNA. May interact with the 5'-terminal helix region of 16S rRNA. This Aliivibrio salmonicida (strain LFI1238) (Vibrio salmonicida (strain LFI1238)) protein is Ribosome-binding factor A.